The primary structure comprises 78 residues: Putative protein PeaD (78 aa).

It belongs to the phage P protein family.

The sequence is that of Putative protein PeaD (peaD) from Escherichia coli (strain K12).